Reading from the N-terminus, the 170-residue chain is UPF0220 protein C8D2.02c (170 aa).

The next 4 helical transmembrane spans lie at leucine 23 to alanine 43, leucine 54 to valine 74, isoleucine 101 to isoleucine 121, and methionine 136 to isoleucine 156.

Belongs to the UPF0220 family.

It is found in the membrane. The protein is UPF0220 protein C8D2.02c of Schizosaccharomyces pombe (strain 972 / ATCC 24843) (Fission yeast).